We begin with the raw amino-acid sequence, 1564 residues long: Superkiller complex protein 3 (1564 aa).

Ser-2 is subject to N-acetylserine. TPR repeat units follow at residues Val-6–Asn-39, Tyr-40–Gln-73, Gly-272–Cys-305, Ser-307–Leu-339, Pro-386–Leu-419, Ala-420–Val-453, Glu-455–Met-492, Gly-493–Asp-527, Lys-564–Asp-597, Phe-598–Ser-631, Tyr-633–Tyr-665, Met-679–Val-713, Ala-790–Asn-824, Leu-826–Asn-860, Ala-861–Tyr-894, Ala-980–Ala-1013, Asn-1020–Ile-1054, Gly-1056–Glu-1084, Lys-1326–Gln-1359, and Val-1400–Arg-1433.

The protein belongs to the SKI3 family. Component of the SKI complex which consists of SKIC2, SKIC3 and SKIC8. Interacts with PAF1. As to expression, widely expressed with the highest levels observed in vascular tissues, lymph node, pituitary, lung and intestine. Not expressed in the liver.

The protein localises to the cytoplasm. It is found in the nucleus. In terms of biological role, component of the SKI complex, a multiprotein complex that assists the RNA-degrading exosome during the mRNA decay and quality-control pathways. The SKI complex catalyzes mRNA extraction from 80S ribosomal complexes in the 3'-5' direction and channels mRNA to the cytosolic exosome for degradation. SKI-mediated extraction of mRNA from stalled ribosomes allow binding of the Pelota-HBS1L complex and subsequent ribosome disassembly by ABCE1 for ribosome recycling. In the nucleus, the SKI complex associates with transcriptionally active genes in a manner dependent on PAF1 complex (PAF1C). In Homo sapiens (Human), this protein is Superkiller complex protein 3.